We begin with the raw amino-acid sequence, 281 residues long: Phosphatidylglycerol--prolipoprotein diacylglyceryl transferase (281 aa).

Transmembrane regions (helical) follow at residues 11-31 (IIFT…VISF), 57-77 (LLYS…IIFY), and 89-109 (VFYI…AIIV). An a 1,2-diacyl-sn-glycero-3-phospho-(1'-sn-glycerol)-binding site is contributed by Arg140. The next 3 membrane-spanning stretches (helical) occupy residues 194 to 214 (PTQL…IYFF), 222 to 242 (GSIS…IEFF), and 255 to 275 (IITM…IIMY).

This sequence belongs to the Lgt family.

The protein resides in the cell inner membrane. It carries out the reaction L-cysteinyl-[prolipoprotein] + a 1,2-diacyl-sn-glycero-3-phospho-(1'-sn-glycerol) = an S-1,2-diacyl-sn-glyceryl-L-cysteinyl-[prolipoprotein] + sn-glycerol 1-phosphate + H(+). It participates in protein modification; lipoprotein biosynthesis (diacylglyceryl transfer). Catalyzes the transfer of the diacylglyceryl group from phosphatidylglycerol to the sulfhydryl group of the N-terminal cysteine of a prolipoprotein, the first step in the formation of mature lipoproteins. The protein is Phosphatidylglycerol--prolipoprotein diacylglyceryl transferase of Buchnera aphidicola subsp. Acyrthosiphon pisum (strain APS) (Acyrthosiphon pisum symbiotic bacterium).